The sequence spans 534 residues: CTP synthase (534 aa).

The segment at 1-265 (MKYIIVTGGV…SNYLLKKLIL (265 aa)) is amidoligase domain. Ser12 serves as a coordination point for CTP. Position 12 (Ser12) interacts with UTP. Residue 13–18 (GLGKGI) participates in ATP binding. An L-glutamine-binding site is contributed by Tyr53. Asp70 serves as a coordination point for ATP. Residues Asp70 and Glu140 each contribute to the Mg(2+) site. Residues 147–149 (DIE), 186–191 (KTKPTQ), and Lys222 each bind CTP. UTP-binding positions include 186–191 (KTKPTQ) and Lys222. Residues 289-530 (NVAIVGKYTH…MGAMLKKSKE (242 aa)) form the Glutamine amidotransferase type-1 domain. L-glutamine is bound at residue Gly352. Residue Cys379 is the Nucleophile; for glutamine hydrolysis of the active site. L-glutamine contacts are provided by residues 380–383 (LGMQ), Glu403, and Arg460. Active-site residues include His503 and Glu505.

The protein belongs to the CTP synthase family. Homotetramer.

The catalysed reaction is UTP + L-glutamine + ATP + H2O = CTP + L-glutamate + ADP + phosphate + 2 H(+). It catalyses the reaction L-glutamine + H2O = L-glutamate + NH4(+). It carries out the reaction UTP + NH4(+) + ATP = CTP + ADP + phosphate + 2 H(+). It functions in the pathway pyrimidine metabolism; CTP biosynthesis via de novo pathway; CTP from UDP: step 2/2. Allosterically activated by GTP, when glutamine is the substrate; GTP has no effect on the reaction when ammonia is the substrate. The allosteric effector GTP functions by stabilizing the protein conformation that binds the tetrahedral intermediate(s) formed during glutamine hydrolysis. Inhibited by the product CTP, via allosteric rather than competitive inhibition. Functionally, catalyzes the ATP-dependent amination of UTP to CTP with either L-glutamine or ammonia as the source of nitrogen. Regulates intracellular CTP levels through interactions with the four ribonucleotide triphosphates. This is CTP synthase from Methanococcoides burtonii (strain DSM 6242 / NBRC 107633 / OCM 468 / ACE-M).